The chain runs to 139 residues: Peptide methionine sulfoxide reductase MsrB (139 aa).

One can recognise a MsrB domain in the interval 8–130 (DREWQRELSP…NSASLQLKTQ (123 aa)). Zn(2+) is bound by residues Cys-47, Cys-50, Cys-96, and Cys-99. Residue Cys-119 is the Nucleophile of the active site.

Belongs to the MsrB Met sulfoxide reductase family. Requires Zn(2+) as cofactor.

The catalysed reaction is L-methionyl-[protein] + [thioredoxin]-disulfide + H2O = L-methionyl-(R)-S-oxide-[protein] + [thioredoxin]-dithiol. The polypeptide is Peptide methionine sulfoxide reductase MsrB (Acinetobacter baumannii (strain AB307-0294)).